A 314-amino-acid polypeptide reads, in one-letter code: RNA 2',3'-cyclic phosphodiesterase (314 aa).

The active-site Proton donor is His43. 2 consecutive short sequence motifs (HXTX) follow at residues His43–Leu46 and His129–Ile132. The active-site Proton acceptor is His129.

This sequence belongs to the 2H phosphoesterase superfamily. ThpR family.

It catalyses the reaction a 3'-end 2',3'-cyclophospho-ribonucleotide-RNA + H2O = a 3'-end 2'-phospho-ribonucleotide-RNA + H(+). In terms of biological role, hydrolyzes RNA 2',3'-cyclic phosphodiester to an RNA 2'-phosphomonoester. This Geobacillus stearothermophilus (Bacillus stearothermophilus) protein is RNA 2',3'-cyclic phosphodiesterase.